Reading from the N-terminus, the 72-residue chain is Crustacean hyperglycemic hormone (72 aa).

Position 1 is a pyrrolidone carboxylic acid (Q1). A D-phenylalanine modification is found at F3. 3 cysteine pairs are disulfide-bonded: C7–C43, C23–C39, and C26–C52. Residue V72 is modified to Valine amide.

Produced by the medulla terminalis X-organ in the eyestalks and transported to the sinus gland where they are stored and released.

It localises to the secreted. Its function is as follows. Hormone found in the sinus gland of isopods and decapods which controls the blood sugar level. Has a secretagogue action over the amylase released from the midgut gland. May act as a stress hormone and may be involved in the control of molting and reproduction. This chain is Crustacean hyperglycemic hormone, found in Astacus astacus (Noble crayfish).